Reading from the N-terminus, the 509-residue chain is Lysine--tRNA ligase (509 aa).

The segment covering 1 to 18 (MSEQNPTQAAKQAPQQEL) has biased composition (polar residues). Residues 1 to 20 (MSEQNPTQAAKQAPQQELND) form a disordered region. Mg(2+)-binding residues include Glu418 and Glu425.

The protein belongs to the class-II aminoacyl-tRNA synthetase family. Homodimer. Requires Mg(2+) as cofactor.

The protein localises to the cytoplasm. The catalysed reaction is tRNA(Lys) + L-lysine + ATP = L-lysyl-tRNA(Lys) + AMP + diphosphate. The chain is Lysine--tRNA ligase from Psychromonas ingrahamii (strain DSM 17664 / CCUG 51855 / 37).